The primary structure comprises 213 residues: Protein SRN2 (213 aa).

The 86-residue stretch at 128–213 (SKYVASWQDY…TWDKQGNLKY (86 aa)) folds into the VPS37 C-terminal domain.

The protein belongs to the VPS37 family. In terms of assembly, component of the ESCRT-I complex (endosomal sorting complex required for transport I) which consists of STP22, VPS28, SRN2 and MVB12 in a 1:1:1:1 stoichiometry. Interacts with STP22 and MVB12.

It is found in the cytoplasm. The protein resides in the endosome. Its subcellular location is the late endosome membrane. Functionally, component of the ESCRT-I complex, a regulator of vesicular trafficking process. Required for normal endocytic and biosynthetic traffic to the yeast vacuole. This chain is Protein SRN2 (SRN2), found in Saccharomyces cerevisiae (strain ATCC 204508 / S288c) (Baker's yeast).